Consider the following 278-residue polypeptide: 3-methyl-2-oxobutanoate hydroxymethyltransferase (278 aa).

The Mg(2+) site is built by Asp43 and Asp82. Residues 43-44 (DS), Asp82, and Lys112 contribute to the 3-methyl-2-oxobutanoate site. Glu114 is a binding site for Mg(2+). The Proton acceptor role is filled by Glu181.

It belongs to the PanB family. In terms of assembly, homodecamer; pentamer of dimers. Mg(2+) serves as cofactor.

The protein localises to the cytoplasm. It carries out the reaction 3-methyl-2-oxobutanoate + (6R)-5,10-methylene-5,6,7,8-tetrahydrofolate + H2O = 2-dehydropantoate + (6S)-5,6,7,8-tetrahydrofolate. It participates in cofactor biosynthesis; (R)-pantothenate biosynthesis; (R)-pantoate from 3-methyl-2-oxobutanoate: step 1/2. Functionally, catalyzes the reversible reaction in which hydroxymethyl group from 5,10-methylenetetrahydrofolate is transferred onto alpha-ketoisovalerate to form ketopantoate. This Bacillus cereus (strain ATCC 14579 / DSM 31 / CCUG 7414 / JCM 2152 / NBRC 15305 / NCIMB 9373 / NCTC 2599 / NRRL B-3711) protein is 3-methyl-2-oxobutanoate hydroxymethyltransferase.